We begin with the raw amino-acid sequence, 661 residues long: DNA cross-link repair protein PSO2/SNM1 (661 aa).

The segment at 1-44 is disordered; the sequence is MSRKSIVQIRRSEVKRKRSSTASSTSEGKTLHKNTHTSSKRQRT. Positions 31-43 are enriched in basic residues; it reads LHKNTHTSSKRQR. A UBZ4-type zinc finger spans residues 144 to 174; sequence VIQCPICLENLSHLELYERETHCDTCIGSDP. 4 residues coordinate Zn(2+): C147, C150, H165, and C169.

The protein belongs to the DNA repair metallo-beta-lactamase (DRMBL) family.

It localises to the nucleus. Its function is as follows. Required for DNA interstrand cross-link repair. This requires cleavage of cross-linked DNA to generate DNA double strand breaks (DSBs). This protein has 5' exonuclease activity on single-stranded and double-stranded DNA, which appears to be necessary for the processing of DNA double strand breaks prior to ligation. This chain is DNA cross-link repair protein PSO2/SNM1 (PSO2), found in Saccharomyces cerevisiae (strain ATCC 204508 / S288c) (Baker's yeast).